We begin with the raw amino-acid sequence, 355 residues long: MSFSDNLAKIVDKYENLGKKLSSGIMGDEFVKASKEYAELEEVVEKIKEYNKAKSELEEANNFKLEVGLDNATLEMIEDEIHTLENSLPKLERAVKIALLPKDEADSKSAIIEVRAGSGGEEAALFAAILFNMYQRYAELKGWHFEILAIVDTGIGGYKEASASIKGKDVFSKLKCESGVHRVQRIPETESHGRIHTSAATVAVLPEVEDVDIKLEDKDLRIDTYRSSGAGGQHVNTTNSAVRITHIPTGITVALQDEKSQHKNKAKALKILRARIYEEERRKKEQKRANNRRGQVGSGDRSERIRTYNFPQGRVSDHRINLTLYKIDEVVKNGQLDEFVDALIADDEAKKLAEI.

Gln-233 is subject to N5-methylglutamine. The segment at 280–310 (ERRKKEQKRANNRRGQVGSGDRSERIRTYNF) is disordered.

This sequence belongs to the prokaryotic/mitochondrial release factor family. Post-translationally, methylated by PrmC. Methylation increases the termination efficiency of RF1.

The protein localises to the cytoplasm. Functionally, peptide chain release factor 1 directs the termination of translation in response to the peptide chain termination codons UAG and UAA. This is Peptide chain release factor 1 from Rickettsia canadensis (strain McKiel).